The chain runs to 673 residues: DNA ligase (673 aa).

NAD(+)-binding positions include 33 to 37 (DYEYD), 82 to 83 (SL), and Glu-113. Lys-115 serves as the catalytic N6-AMP-lysine intermediate. Positions 136, 170, 285, and 309 each coordinate NAD(+). Zn(2+) contacts are provided by Cys-403, Cys-406, Cys-421, and Cys-426. A BRCT domain is found at 583-672 (AKSDILKGYT…SREEAEKILM (90 aa)).

It belongs to the NAD-dependent DNA ligase family. LigA subfamily. Requires Mg(2+) as cofactor. It depends on Mn(2+) as a cofactor.

It catalyses the reaction NAD(+) + (deoxyribonucleotide)n-3'-hydroxyl + 5'-phospho-(deoxyribonucleotide)m = (deoxyribonucleotide)n+m + AMP + beta-nicotinamide D-nucleotide.. In terms of biological role, DNA ligase that catalyzes the formation of phosphodiester linkages between 5'-phosphoryl and 3'-hydroxyl groups in double-stranded DNA using NAD as a coenzyme and as the energy source for the reaction. It is essential for DNA replication and repair of damaged DNA. This Caldicellulosiruptor bescii (strain ATCC BAA-1888 / DSM 6725 / KCTC 15123 / Z-1320) (Anaerocellum thermophilum) protein is DNA ligase.